Here is an 804-residue protein sequence, read N- to C-terminus: Enhancer of polycomb homolog 2 (804 aa).

Disordered stretches follow at residues 372–398 (QSSD…PDGS), 484–507 (GFSS…SDRH), 602–623 (QQSQ…KSDC), and 642–669 (NSPT…VQPS). Over residues 602–611 (QQSQQSLQQS) the composition is skewed to low complexity. The span at 654-669 (DQNAGHSNLNGVVQPS) shows a compositional bias: polar residues.

Belongs to the enhancer of polycomb family.

The protein resides in the nucleus. Its function is as follows. May play a role in transcription or DNA repair. This is Enhancer of polycomb homolog 2 (epc2) from Xenopus tropicalis (Western clawed frog).